Consider the following 706-residue polypeptide: uncharacterized protein (706 aa).

3 coiled-coil regions span residues 86-162 (TKNV…AKKI), 269-299 (DYLK…VNEL), and 337-427 (DDYI…QSDY).

This is an uncharacterized protein from Staphylococcus aureus (strain MRSA252).